Here is a 1115-residue protein sequence, read N- to C-terminus: Ubiquitin C-terminal hydrolase 13 (1115 aa).

The disordered stretch occupies residues 1–51; that stretch reads MTMMTPPPLDQQEDEEMLVPNPDLVEGPQPMEVAQTDPAATAVENPPPEDP. The region spanning 53–178 is the MATH domain; that stretch reads SLKFTWTIPM…NDTVLIEAEV (126 aa). In terms of domain architecture, USP spans 198-522; that stretch reads VGLKNQGATC…NAYMLVYIRE (325 aa). The Nucleophile role is filled by cysteine 207. The active-site Proton acceptor is the histidine 454.

This sequence belongs to the peptidase C19 family. In terms of assembly, interacts with SIC/RON3. Interacts with RGI1 and RGI2.

The catalysed reaction is Thiol-dependent hydrolysis of ester, thioester, amide, peptide and isopeptide bonds formed by the C-terminal Gly of ubiquitin (a 76-residue protein attached to proteins as an intracellular targeting signal).. Recognizes and hydrolyzes the peptide bond at the C-terminal Gly of ubiquitin. Involved in the processing of poly-ubiquitin precursors as well as that of ubiquitinated proteins. Positive regulator of root meristem development that, together with UBP12, prevents the ubiquitination and turnover of RGFR1 induced by the RGF1 hormone peptide, thus influencing PLT1 and PLT2 expression. The polypeptide is Ubiquitin C-terminal hydrolase 13 (Arabidopsis thaliana (Mouse-ear cress)).